The sequence spans 247 residues: Eukaryotic translation initiation factor 6 (247 aa).

2 positions are modified to phosphoserine; by CK1: S174 and S175.

It belongs to the eIF-6 family. In terms of assembly, monomer. Associates with the 60S ribosomal subunit. In terms of processing, phosphorylation at Ser-174 and Ser-175 promotes nuclear export.

The protein resides in the cytoplasm. It is found in the nucleus. It localises to the nucleolus. Its function is as follows. Binds to the 60S ribosomal subunit and prevents its association with the 40S ribosomal subunit to form the 80S initiation complex in the cytoplasm. Is also involved in ribosome biogenesis. Associates with pre-60S subunits in the nucleus and is involved in its nuclear export. This Aspergillus oryzae (strain ATCC 42149 / RIB 40) (Yellow koji mold) protein is Eukaryotic translation initiation factor 6 (tif6).